We begin with the raw amino-acid sequence, 20 residues long: L-amino-acid oxidase L1 (20 aa).

The protein belongs to the flavin monoamine oxidase family. FIG1 subfamily. In terms of assembly, monomer. This is in contrast with most of its orthologs, that are non-covalently linked homodimers. The cofactor is FAD. In terms of processing, N-glycosylated. In terms of tissue distribution, expressed by the venom gland.

The protein localises to the secreted. The enzyme catalyses an L-alpha-amino acid + O2 + H2O = a 2-oxocarboxylate + H2O2 + NH4(+). It catalyses the reaction L-leucine + O2 + H2O = 4-methyl-2-oxopentanoate + H2O2 + NH4(+). The catalysed reaction is L-phenylalanine + O2 + H2O = 3-phenylpyruvate + H2O2 + NH4(+). It carries out the reaction L-tryptophan + O2 + H2O = indole-3-pyruvate + H2O2 + NH4(+). The enzyme catalyses L-methionine + O2 + H2O = 4-methylsulfanyl-2-oxobutanoate + H2O2 + NH4(+). It catalyses the reaction L-isoleucine + O2 + H2O = (S)-3-methyl-2-oxopentanoate + H2O2 + NH4(+). The catalysed reaction is L-tyrosine + O2 + H2O = 3-(4-hydroxyphenyl)pyruvate + H2O2 + NH4(+). Its function is as follows. Catalyzes an oxidative deamination of predominantly hydrophobic and aromatic L-amino acids, thus producing hydrogen peroxide that may contribute to the diverse toxic effects of this enzyme. Is active on L-Met, L-Ile, L-Leu, L-Phe, L-Trp, and L-Tyr. Exhibits diverse biological activities, such as hemorrhage, hemolysis, edema, apoptosis of vascular endothelial cells or tumor cell lines, antibacterial and antiparasitic activities, as well as regulation of platelet aggregation. Its effect on platelets is controversial, since it either induces aggregation or inhibits agonist-induced aggregation. These different effects are probably due to different experimental conditions. The polypeptide is L-amino-acid oxidase L1 (Daboia russelii (Russel's viper)).